A 476-amino-acid chain; its full sequence is MDFEAVIGLEVHAELSTNTKIYCGCTTEFGGQPNTHVCPICLGLPGSLPQLNKRVVEYGIKAGLALNCSINKVCRMDRKNYFYPDCPKNYQITQDEVPICRDGYIEIELENGEKKKIGIERIHMEEDAGKLLHTNAGTLVDYNRAGVPLIEIVSRPDIRTPEEATKYLEKLKSILSSIEVSDCKMEQGSLRCDGNISVMPKGSEKFGVRSEIKNMNSFKALEKALSYEYDRHVEAVTKGEILEQETRRWDEANSVTVLMRSKEKANDYRYFPEGDLVTLNISDEWIEEVRKTIPELPHEKAERFVNEFGIPKYDAMVLTLTMDMAKFFEETALKSEDAKAASNWLMGDISRLMNEKAIEVKDLKFNPEQLAQLIKLINAGTISNNIGKKVLDDMFKSGKNPKDIVEEKGLVQNNDEGAILEVVKNIIENNPQSIEDFKNGKKRALGFLVGLVMKETKGKANPQIVNKLVSEEANKM.

It belongs to the GatB/GatE family. GatB subfamily. Heterotrimer of A, B and C subunits.

The catalysed reaction is L-glutamyl-tRNA(Gln) + L-glutamine + ATP + H2O = L-glutaminyl-tRNA(Gln) + L-glutamate + ADP + phosphate + H(+). It catalyses the reaction L-aspartyl-tRNA(Asn) + L-glutamine + ATP + H2O = L-asparaginyl-tRNA(Asn) + L-glutamate + ADP + phosphate + 2 H(+). Functionally, allows the formation of correctly charged Asn-tRNA(Asn) or Gln-tRNA(Gln) through the transamidation of misacylated Asp-tRNA(Asn) or Glu-tRNA(Gln) in organisms which lack either or both of asparaginyl-tRNA or glutaminyl-tRNA synthetases. The reaction takes place in the presence of glutamine and ATP through an activated phospho-Asp-tRNA(Asn) or phospho-Glu-tRNA(Gln). The protein is Aspartyl/glutamyl-tRNA(Asn/Gln) amidotransferase subunit B of Clostridium botulinum (strain ATCC 19397 / Type A).